The primary structure comprises 436 residues: Eukaryotic translation initiation factor 5 (436 aa).

27–34 (GKGNGIKT) lines the GTP pocket. The disordered stretch occupies residues 177 to 203 (NSDKGSSNDDDDDDWEPEPVEPNGMLS). The span at 184–195 (NDDDDDDWEPEP) shows a compositional bias: acidic residues. A W2 domain is found at 216–379 (EKSEEQRLDM…KEAEEETEEE (164 aa)). Basic and acidic residues predominate over residues 396–408 (LRQQKEKAAREAQ). Residues 396–436 (LRQQKEKAAREAQQKSAKATNGNAAAASGANDEEDLDIDDI) are disordered. Positions 409-425 (QKSAKATNGNAAAASGA) are enriched in low complexity. The segment covering 426–436 (NDEEDLDIDDI) has biased composition (acidic residues).

Belongs to the eIF-2-beta/eIF-5 family.

In terms of biological role, catalyzes the hydrolysis of GTP bound to the 40S ribosomal initiation complex (40S.mRNA.Met-tRNA[F].eIF-2.GTP) with the subsequent joining of a 60S ribosomal subunit resulting in the release of eIF-2 and the guanine nucleotide. The subsequent joining of a 60S ribosomal subunit results in the formation of a functional 80S initiation complex (80S.mRNA.Met-tRNA[F]). The polypeptide is Eukaryotic translation initiation factor 5 (Caenorhabditis elegans).